Here is a 208-residue protein sequence, read N- to C-terminus: Uracil phosphoribosyltransferase (208 aa).

5-phospho-alpha-D-ribose 1-diphosphate-binding positions include arginine 78, arginine 103, and aspartate 130 to serine 138. Uracil contacts are provided by residues isoleucine 193 and glycine 198 to alanine 200. Aspartate 199 provides a ligand contact to 5-phospho-alpha-D-ribose 1-diphosphate.

It belongs to the UPRTase family. Mg(2+) serves as cofactor.

The enzyme catalyses UMP + diphosphate = 5-phospho-alpha-D-ribose 1-diphosphate + uracil. It participates in pyrimidine metabolism; UMP biosynthesis via salvage pathway; UMP from uracil: step 1/1. With respect to regulation, allosterically activated by GTP. Functionally, catalyzes the conversion of uracil and 5-phospho-alpha-D-ribose 1-diphosphate (PRPP) to UMP and diphosphate. This chain is Uracil phosphoribosyltransferase, found in Aeromonas salmonicida (strain A449).